We begin with the raw amino-acid sequence, 252 residues long: Large ribosomal subunit protein uL29m (252 aa).

An N6-acetyllysine modification is found at lysine 146. Over residues lysine 230–phenylalanine 240 the composition is skewed to basic residues. The segment at lysine 230–valine 252 is disordered.

This sequence belongs to the universal ribosomal protein uL29 family. In terms of assembly, component of the mitochondrial ribosome large subunit (39S) which comprises a 16S rRNA and about 50 distinct proteins.

It localises to the mitochondrion. The protein is Large ribosomal subunit protein uL29m (Mrpl47) of Mus musculus (Mouse).